Here is a 270-residue protein sequence, read N- to C-terminus: Tryptophan synthase alpha chain (270 aa).

Catalysis depends on proton acceptor residues glutamate 51 and aspartate 62.

It belongs to the TrpA family. In terms of assembly, tetramer of two alpha and two beta chains.

It carries out the reaction (1S,2R)-1-C-(indol-3-yl)glycerol 3-phosphate + L-serine = D-glyceraldehyde 3-phosphate + L-tryptophan + H2O. The protein operates within amino-acid biosynthesis; L-tryptophan biosynthesis; L-tryptophan from chorismate: step 5/5. In terms of biological role, the alpha subunit is responsible for the aldol cleavage of indoleglycerol phosphate to indole and glyceraldehyde 3-phosphate. In Methanothermobacter thermautotrophicus (strain ATCC 29096 / DSM 1053 / JCM 10044 / NBRC 100330 / Delta H) (Methanobacterium thermoautotrophicum), this protein is Tryptophan synthase alpha chain.